The primary structure comprises 419 residues: UPF0242 protein TC_0906 (419 aa).

Belongs to the UPF0242 family.

The chain is UPF0242 protein TC_0906 from Chlamydia muridarum (strain MoPn / Nigg).